Consider the following 314-residue polypeptide: tRNA pseudouridine synthase B (314 aa).

Position 43 (H43) interacts with substrate. D48 acts as the Nucleophile in catalysis. Residues Y76, Y179, and L200 each contribute to the substrate site.

It belongs to the pseudouridine synthase TruB family. Type 1 subfamily.

The catalysed reaction is uridine(55) in tRNA = pseudouridine(55) in tRNA. Its function is as follows. Responsible for synthesis of pseudouridine from uracil-55 in the psi GC loop of transfer RNAs. The chain is tRNA pseudouridine synthase B from Citrobacter koseri (strain ATCC BAA-895 / CDC 4225-83 / SGSC4696).